The chain runs to 343 residues: Fe-S cluster assembly protein DRE2 (343 aa).

The interval 1–188 is N-terminal SAM-like domain; that stretch reads MTVSRDSLVL…KKLTKKVSAI (188 aa). The tract at residues 189–240 is linker; that stretch reads KLTDSDLEDDDDDLESDDSANNSKTKFFDDFDDPETGDSIDEDDLIAETEED. 2 stretches are compositionally biased toward acidic residues: residues 195 to 206 and 218 to 228; these read LEDDDDDLESDD and DFDDPETGDSI. The interval 195–228 is disordered; that stretch reads LEDDDDDLESDDSANNSKTKFFDDFDDPETGDSI. [2Fe-2S] cluster-binding residues include C247, C258, C261, and C263. Positions 247 to 263 are fe-S binding site A; it reads CGKSKQRRRKACKDCSC. [4Fe-4S] cluster-binding residues include C306, C309, C317, and C320. Short sequence motifs (cx2C motif) lie at residues 306-309 and 317-320; these read CGSC and CSGC. The interval 306–320 is fe-S binding site B; the sequence is CGSCALGDAFRCSGC.

The protein belongs to the anamorsin family. In terms of assembly, monomer. Interacts with TAH18. Interacts with MIA40. [2Fe-2S] cluster is required as a cofactor. Requires [4Fe-4S] cluster as cofactor.

Its subcellular location is the cytoplasm. The protein resides in the mitochondrion intermembrane space. In terms of biological role, component of the cytosolic iron-sulfur (Fe-S) protein assembly (CIA) machinery required for the maturation of extramitochondrial Fe-S proteins. Part of an electron transfer chain functioning in an early step of cytosolic Fe-S biogenesis, facilitating the de novo assembly of a [4Fe-4S] cluster on the scaffold complex CFD1-NBP35. Electrons are transferred to DRE2 from NADPH via the FAD- and FMN-containing protein TAH18. TAH18-DRE2 are also required for the assembly of the diferric tyrosyl radical cofactor of ribonucleotide reductase (RNR), probably by providing electrons for reduction during radical cofactor maturation in the catalytic small subunit RNR2. In Kluyveromyces lactis (strain ATCC 8585 / CBS 2359 / DSM 70799 / NBRC 1267 / NRRL Y-1140 / WM37) (Yeast), this protein is Fe-S cluster assembly protein DRE2.